We begin with the raw amino-acid sequence, 142 residues long: Ornithine decarboxylase antizyme (142 aa).

The span at 1 to 19 shows a compositional bias: low complexity; sequence MSSSIVLSNNNSNSNSMSM. Positions 1–34 are disordered; the sequence is MSSSIVLSNNNSNSNSMSMIGQSPPCCSDVPNTP.

It belongs to the ODC antizyme family. Interacts with ODC1 and thereby sterically blocks ODC homodimerization.

Functionally, ornithine decarboxylase (ODC) antizyme protein that negatively regulates ODC activity and intracellular polyamine biosynthesis and uptake in response to increased intracellular polyamine levels. Binds to ODC monomers, inhibiting the assembly of the functional ODC homodimer, and targets the monomers for ubiquitin-independent proteolytic destruction by the 26S proteasome. This is Ornithine decarboxylase antizyme from Pristionchus pacificus (Parasitic nematode).